A 550-amino-acid polypeptide reads, in one-letter code: Eukaryotic translation initiation factor 3 subunit D-2 (550 aa).

Residues 108-152 (RTRGRTGRGTPNIASLGGSTAGGATASTTKYGKGRHTRNTQNVGR) are disordered. The span at 115–136 (RGTPNIASLGGSTAGGATASTT) shows a compositional bias: low complexity. The segment at 290-304 (QFDLLTVNETSVEPP) is RNA gate. The segment at 527–550 (PENAFDSDRDEEESSEPLSNSNDN) is disordered.

Belongs to the eIF-3 subunit D family. As to quaternary structure, component of the eukaryotic translation initiation factor 3 (eIF-3) complex. The eIF-3 complex interacts with pix.

It localises to the cytoplasm. Functionally, mRNA cap-binding component of the eukaryotic translation initiation factor 3 (eIF-3) complex, which is involved in protein synthesis of a specialized repertoire of mRNAs and, together with other initiation factors, stimulates binding of mRNA and methionyl-tRNAi to the 40S ribosome. The eIF-3 complex specifically targets and initiates translation of a subset of mRNAs involved in cell proliferation. In the eIF-3 complex, eif3d specifically recognizes and binds the 7-methylguanosine cap of a subset of mRNAs. The chain is Eukaryotic translation initiation factor 3 subunit D-2 from Drosophila sechellia (Fruit fly).